A 252-amino-acid chain; its full sequence is 3-deoxy-manno-octulosonate cytidylyltransferase (252 aa).

The protein belongs to the KdsB family.

It localises to the cytoplasm. It carries out the reaction 3-deoxy-alpha-D-manno-oct-2-ulosonate + CTP = CMP-3-deoxy-beta-D-manno-octulosonate + diphosphate. It participates in nucleotide-sugar biosynthesis; CMP-3-deoxy-D-manno-octulosonate biosynthesis; CMP-3-deoxy-D-manno-octulosonate from 3-deoxy-D-manno-octulosonate and CTP: step 1/1. The protein operates within bacterial outer membrane biogenesis; lipopolysaccharide biosynthesis. Activates KDO (a required 8-carbon sugar) for incorporation into bacterial lipopolysaccharide in Gram-negative bacteria. The chain is 3-deoxy-manno-octulosonate cytidylyltransferase from Solibacter usitatus (strain Ellin6076).